Here is a 251-residue protein sequence, read N- to C-terminus: MSDHVYNLVKKHHSVRKFKNKPLSEDVVKKLVEAGQSASTSSFLQAYSIIGIDDEQIKENLREVSGQPYVVENGYLFVFVIDYYRHHLVDQHAETDMENAYGSTEGLLVGAIDAALVAENIAVTAEDMGYGIVFLGSLRNDVARVREILDLPDYVFPLFGMAVGEPAEDENGAAKPRLPFDHVFHHNKYHADKETQYAQMADYDQTISKYYDQRTNGNRKETWSQQIEMFLGNKARLDMLEQLQKSGLIQR.

The protein belongs to the flavin oxidoreductase frp family. FMN serves as cofactor.

Reduces FMN, organic nitro compounds and disulfide DTNB. Involved in maintenance of the cellular redox state and the disulfide stress response. The protein is NADPH-dependent oxidoreductase (nfrA) of Staphylococcus aureus (strain MRSA252).